The chain runs to 370 residues: Alpha-ketoglutarate-dependent dioxygenase cnsP (370 aa).

Over residues 1-12 (MSTTTVITPGTI) the composition is skewed to low complexity. The disordered stretch occupies residues 1-20 (MSTTTVITPGTITREKNENG). Position 131 (H131) interacts with substrate. Residues H169 and D171 each contribute to the Fe cation site. T197 lines the 2-oxoglutarate pocket. Fe cation is bound at residue H321. 2-oxoglutarate is bound by residues R333 and R337. R337 lines the substrate pocket.

It belongs to the TfdA dioxygenase family. Requires Fe(2+) as cofactor.

Its pathway is alkaloid biosynthesis. Its function is as follows. Alpha-ketoglutarate-dependent dioxygenase; part of the gene cluster that mediates the biosynthesis of communesins, a prominent class of indole alkaloids with great potential as pharmaceuticals. Communesins are biosynthesized by the coupling of tryptamine and aurantioclavine, two building blocks derived from L-tryptophan. The L-tryptophan decarboxylase cnsB converts L-tryptophan to tryptamine, whereas the tryptophan dimethylallyltransferase cnsF converts L-tryptophan to 4-dimethylallyl tryptophan which is further transformed to aurantioclavine by the aurantioclavine synthase cnsA, probably aided by the catalase cnsD. The cytochrome P450 monooxygenase cnsC catalyzes the heterodimeric coupling between the two different indole moieties, tryptamine and aurantioclavine, to construct vicinal quaternary stereocenters and yield the heptacyclic communesin scaffold. The O-methyltransferase cnsE then methylates the communesin scaffold to produce communesin K, the simplest characterized communesin that contains the heptacyclic core. The dioxygenase cnsJ converts communesin K into communesin I. Acylation to introduce the hexadienyl group at position N16 of communesin I by the acyltransferase cnsK leads to the production of communesin B. The hexadienyl group is produced by the highly reducing polyketide synthase cnsI, before being hydrolytically removed from cnsI by the serine hydrolase cnsH, converted into hexadienyl-CoA by the CoA ligase cnsG, and then transferred to communesin I by cnsK. Surprisingly, cnsK may also be a promiscuous acyltransferase that can tolerate a range of acyl groups, including acetyl-, propionyl-, and butyryl-CoA, which lead to communesins A, G and H respectively. The roles of the alpha-ketoglutarate-dependent dioxygenases cnsM and cnsP have still to be determined. The chain is Alpha-ketoglutarate-dependent dioxygenase cnsP from Penicillium expansum (Blue mold rot fungus).